The following is a 261-amino-acid chain: MIKWPWRTQPPAQQDSYPWPEACAIPLLAALGDDEQQRLIALARQVIRQKRLIPLQELRVTPLMEARIALLFALPVLELGIGWLDGFHEILLYPEPYVLHEEWEDDIGLVHCGPSVQAGQCSAQGPVVLNWLDVRDSFDCSGYNLIIHETAHKLDMRNAGIASGIPPIPLREIAAWEQALHAAMEAIQEEADLLGKEGASMDAYAASEPAECFAVLSEYFFSAPELLSERFPAVYAHFARFYRQDPLQRLYQSGLLTPESF.

Zn(2+) contacts are provided by His111, His148, His152, and Glu211.

The protein belongs to the MtfA family. In terms of assembly, interacts with Mlc. Requires Zn(2+) as cofactor.

The protein resides in the cytoplasm. In terms of biological role, involved in the modulation of the activity of the glucose-phosphotransferase system (glucose-PTS). Interacts with the transcriptional repressor Mlc, preventing its interaction with DNA and leading to the modulation of expression of genes regulated by Mlc, including ptsG, which encodes the PTS system glucose-specific EIICB component. Functionally, shows zinc-dependent metallopeptidase activity. The sequence is that of Mlc titration factor A from Edwardsiella ictaluri (strain 93-146).